A 1342-amino-acid polypeptide reads, in one-letter code: DNA-directed RNA polymerase subunit beta (1342 aa).

The protein belongs to the RNA polymerase beta chain family. In terms of assembly, the RNAP catalytic core consists of 2 alpha, 1 beta, 1 beta' and 1 omega subunit. When a sigma factor is associated with the core the holoenzyme is formed, which can initiate transcription.

It catalyses the reaction RNA(n) + a ribonucleoside 5'-triphosphate = RNA(n+1) + diphosphate. Functionally, DNA-dependent RNA polymerase catalyzes the transcription of DNA into RNA using the four ribonucleoside triphosphates as substrates. The chain is DNA-directed RNA polymerase subunit beta from Klebsiella pneumoniae subsp. pneumoniae (strain ATCC 700721 / MGH 78578).